A 320-amino-acid polypeptide reads, in one-letter code: Nuclease (320 aa).

Catalysis depends on His155, which acts as the Proton acceptor. Asn187 contacts Mg(2+). The N-linked (GlcNAc...) asparagine glycan is linked to Asn204. Cys312 and Cys317 are oxidised to a cystine.

It belongs to the DNA/RNA non-specific endonuclease family. Homodimer; as a result of non-covalent interactions and not through the disulfide linkages between the two monomers. It depends on Mg(2+) as a cofactor. The cofactor is Mn(2+). Glycosylated.

Its subcellular location is the secreted. This enzyme has both RNase and DNase activity. The sequence is that of Nuclease from Syncephalastrum racemosum (Filamentous fungus).